Consider the following 349-residue polypeptide: Fructose-1,6-bisphosphatase class 1 (349 aa).

Mg(2+) contacts are provided by E91, D110, L112, and D113. Residues 113–116 (DGSS) and N205 each bind substrate. Position 277 (E277) interacts with Mg(2+).

It belongs to the FBPase class 1 family. As to quaternary structure, homotetramer. It depends on Mg(2+) as a cofactor.

The protein localises to the cytoplasm. The catalysed reaction is beta-D-fructose 1,6-bisphosphate + H2O = beta-D-fructose 6-phosphate + phosphate. Its pathway is carbohydrate biosynthesis; gluconeogenesis. This Sinorhizobium medicae (strain WSM419) (Ensifer medicae) protein is Fructose-1,6-bisphosphatase class 1.